The following is a 492-amino-acid chain: 3-octaprenyl-4-hydroxybenzoate carboxy-lyase (492 aa).

Mn(2+) is bound at residue Asn175. Prenylated FMN is bound by residues 178–180, 192–194, and 197–198; these read IYR, RWL, and RG. Glu241 contacts Mn(2+). The Proton donor role is filled by Asp290.

This sequence belongs to the UbiD family. In terms of assembly, homohexamer. Requires prenylated FMN as cofactor. The cofactor is Mn(2+).

It localises to the cell membrane. The catalysed reaction is a 4-hydroxy-3-(all-trans-polyprenyl)benzoate + H(+) = a 2-(all-trans-polyprenyl)phenol + CO2. The protein operates within cofactor biosynthesis; ubiquinone biosynthesis. In terms of biological role, catalyzes the decarboxylation of 3-octaprenyl-4-hydroxy benzoate to 2-octaprenylphenol, an intermediate step in ubiquinone biosynthesis. This Salmonella typhi protein is 3-octaprenyl-4-hydroxybenzoate carboxy-lyase.